The following is a 450-amino-acid chain: MKNIASFANKKVLVLGLAKSGESAARLLDKLGAIVTVNDGKPFEENPAAQSLLEEGIKVVTGGHPLELLDENFELMVKNPGIPYNNAMVIRALEKKIPVITEVELAYLISEAPIIGITGSNGKTTTTTMIAQVLTAGGQNGLLSGNIGFPASQVAQSACGKDTLVMELSSFQLMGIEAFHPQIAVITNLMPTHLDYHGSFEEYAAAKWNIQKNMTADDYLVLNFNQDWAKGMASQTQATVVPFSTTEKVDGAYLDGDVLTFRGEAIIKVAEIGVPGSHNVENALATIAVAKLRGIDNQTIKEVLSAFGGVKHRLQYVGQVNEVAFYNDSKSTNILATQKALSGFDNSKVILIAGGLDRGNEFDELVPDLKGLKKMVILGQSAPRVKRAADQAGVSYLDATDVRDAAHKAFALAEPGDIVLLSPANASWDMYSNFEVRGDEFLVAFEELKG.

An ATP-binding site is contributed by 119–125 (GSNGKTT).

The protein belongs to the MurCDEF family.

Its subcellular location is the cytoplasm. It carries out the reaction UDP-N-acetyl-alpha-D-muramoyl-L-alanine + D-glutamate + ATP = UDP-N-acetyl-alpha-D-muramoyl-L-alanyl-D-glutamate + ADP + phosphate + H(+). Its pathway is cell wall biogenesis; peptidoglycan biosynthesis. Cell wall formation. Catalyzes the addition of glutamate to the nucleotide precursor UDP-N-acetylmuramoyl-L-alanine (UMA). This chain is UDP-N-acetylmuramoylalanine--D-glutamate ligase, found in Streptococcus gordonii (strain Challis / ATCC 35105 / BCRC 15272 / CH1 / DL1 / V288).